Reading from the N-terminus, the 638-residue chain is Chaperone protein DnaK (638 aa).

Threonine 198 carries the post-translational modification Phosphothreonine; by autocatalysis. The interval 599 to 638 is disordered; it reads IYESQQAEGGAEGGPSGHHDDGIVDADYEEVKDDNTKKSA. Residues 621–630 are compositionally biased toward acidic residues; that stretch reads IVDADYEEVK.

This sequence belongs to the heat shock protein 70 family.

Acts as a chaperone. The chain is Chaperone protein DnaK from Allorhizobium ampelinum (strain ATCC BAA-846 / DSM 112012 / S4) (Agrobacterium vitis (strain S4)).